Reading from the N-terminus, the 476-residue chain is Probable cytosolic Fe-S cluster assembly factor GF22738 (476 aa).

Positions 23, 68, 71, 74, 187, 243, 395, and 399 each coordinate [4Fe-4S] cluster.

It belongs to the NARF family.

In terms of biological role, component of the cytosolic iron-sulfur (Fe/S) protein assembly machinery. Required for maturation of extramitochondrial Fe/S proteins. The polypeptide is Probable cytosolic Fe-S cluster assembly factor GF22738 (Drosophila ananassae (Fruit fly)).